A 409-amino-acid chain; its full sequence is 5-aminolevulinate synthase (409 aa).

Substrate-binding residues include Arg-21 and Ser-136. The pyridoxal 5'-phosphate site is built by Ser-188, His-216, and Thr-244. Residue Lys-247 is part of the active site. N6-(pyridoxal phosphate)lysine is present on Lys-247. Residues Thr-276 and Thr-277 each coordinate pyridoxal 5'-phosphate. A substrate-binding site is contributed by Thr-362.

Belongs to the class-II pyridoxal-phosphate-dependent aminotransferase family. As to quaternary structure, homodimer. Pyridoxal 5'-phosphate is required as a cofactor.

The enzyme catalyses succinyl-CoA + glycine + H(+) = 5-aminolevulinate + CO2 + CoA. It functions in the pathway porphyrin-containing compound metabolism; protoporphyrin-IX biosynthesis; 5-aminolevulinate from glycine: step 1/1. This is 5-aminolevulinate synthase (hemA) from Bradyrhizobium diazoefficiens (strain JCM 10833 / BCRC 13528 / IAM 13628 / NBRC 14792 / USDA 110).